We begin with the raw amino-acid sequence, 231 residues long: 5'-methylthioadenosine/S-adenosylhomocysteine nucleosidase (231 aa).

The active-site Proton acceptor is E12. Residues G78, V153, and 174-175 (ME) contribute to the substrate site. Catalysis depends on D198, which acts as the Proton donor.

It belongs to the PNP/UDP phosphorylase family. MtnN subfamily.

It carries out the reaction S-adenosyl-L-homocysteine + H2O = S-(5-deoxy-D-ribos-5-yl)-L-homocysteine + adenine. The catalysed reaction is S-methyl-5'-thioadenosine + H2O = 5-(methylsulfanyl)-D-ribose + adenine. It catalyses the reaction 5'-deoxyadenosine + H2O = 5-deoxy-D-ribose + adenine. The protein operates within amino-acid biosynthesis; L-methionine biosynthesis via salvage pathway; S-methyl-5-thio-alpha-D-ribose 1-phosphate from S-methyl-5'-thioadenosine (hydrolase route): step 1/2. Catalyzes the irreversible cleavage of the glycosidic bond in both 5'-methylthioadenosine (MTA) and S-adenosylhomocysteine (SAH/AdoHcy) to adenine and the corresponding thioribose, 5'-methylthioribose and S-ribosylhomocysteine, respectively. Also cleaves 5'-deoxyadenosine, a toxic by-product of radical S-adenosylmethionine (SAM) enzymes, into 5-deoxyribose and adenine. In Aliivibrio fischeri (Vibrio fischeri), this protein is 5'-methylthioadenosine/S-adenosylhomocysteine nucleosidase.